The following is a 125-amino-acid chain: U11-myrmicitoxin-Ta1a (125 aa).

The signal sequence occupies residues 1 to 21 (MKTVIFILGFAFVAILIPTNG). Positions 22 to 91 (ESMADADAMA…RAMAAAYAAA (70 aa)) are excised as a propeptide. Cys-101 and Cys-124 are joined by a disulfide.

It belongs to the formicidae venom precursor-01 superfamily. As to expression, expressed by the venom gland.

The protein localises to the secreted. It is found in the target cell membrane. Its function is as follows. Neurotoxin that causes irreversible rapid flaccid paralysis in blowflies and honeybees upon intrathoracic injection. Causes a quick and irreversible cytolytic effect (at 10 uM) indicating it possibly acts as a pore-forming peptide. Shows only weak effect on aphids (A.pisum) at high doses 24 hours post intrathoracic injection. In vitro, is not cytotoxic on the dipteran S2 Drosophila embryonic cell line. This chain is U11-myrmicitoxin-Ta1a, found in Tetramorium africanum (Fierce ant).